A 69-amino-acid chain; its full sequence is Cytochrome c oxidase subunit 8A, mitochondrial (69 aa).

The N-terminal 25 residues, 1–25 (MSVLTPLLLRGLTGSARRLPVPRAK), are a transit peptide targeting the mitochondrion. An SIFI-degron motif is present at residues 2–19 (SVLTPLLLRGLTGSARRL). The Mitochondrial matrix segment spans residues 26-36 (IHSLPPEGKLG). The helical transmembrane segment at 37–60 (IMELAVGLTSCFVTFLLPAGWILS) threads the bilayer. Residues 61–69 (HLETYRRPE) are Mitochondrial intermembrane-facing.

Belongs to the cytochrome c oxidase VIII family. In terms of assembly, component of the cytochrome c oxidase (complex IV, CIV), a multisubunit enzyme composed of 14 subunits. The complex is composed of a catalytic core of 3 subunits MT-CO1, MT-CO2 and MT-CO3, encoded in the mitochondrial DNA, and 11 supernumerary subunits COX4I1 (or COX4I2), COX5A, COX5B, COX6A1 (or COX6A2), COX6B1 (or COX6B2), COX6C, COX7A2 (or COX7A1), COX7B, COX7C, COX8A and NDUFA4, which are encoded in the nuclear genome. The complex exists as a monomer or a dimer and forms supercomplexes (SCs) in the inner mitochondrial membrane with NADH-ubiquinone oxidoreductase (complex I, CI) and ubiquinol-cytochrome c oxidoreductase (cytochrome b-c1 complex, complex III, CIII), resulting in different assemblies (supercomplex SCI(1)III(2)IV(1) and megacomplex MCI(2)III(2)IV(2)). Post-translationally, in response to mitochondrial stress, the precursor protein is ubiquitinated by the SIFI complex in the cytoplasm before mitochondrial import, leading to its degradation. Within the SIFI complex, UBR4 initiates ubiquitin chain that are further elongated or branched by KCMF1. As to expression, widely expressed.

It localises to the mitochondrion inner membrane. It functions in the pathway energy metabolism; oxidative phosphorylation. Component of the cytochrome c oxidase, the last enzyme in the mitochondrial electron transport chain which drives oxidative phosphorylation. The respiratory chain contains 3 multisubunit complexes succinate dehydrogenase (complex II, CII), ubiquinol-cytochrome c oxidoreductase (cytochrome b-c1 complex, complex III, CIII) and cytochrome c oxidase (complex IV, CIV), that cooperate to transfer electrons derived from NADH and succinate to molecular oxygen, creating an electrochemical gradient over the inner membrane that drives transmembrane transport and the ATP synthase. Cytochrome c oxidase is the component of the respiratory chain that catalyzes the reduction of oxygen to water. Electrons originating from reduced cytochrome c in the intermembrane space (IMS) are transferred via the dinuclear copper A center (CU(A)) of subunit 2 and heme A of subunit 1 to the active site in subunit 1, a binuclear center (BNC) formed by heme A3 and copper B (CU(B)). The BNC reduces molecular oxygen to 2 water molecules using 4 electrons from cytochrome c in the IMS and 4 protons from the mitochondrial matrix. This is Cytochrome c oxidase subunit 8A, mitochondrial (COX8A) from Homo sapiens (Human).